The primary structure comprises 327 residues: MGALPRVPLITAPTRLHPVDGLAPRRVLVKRDDENSPVFGGCKTRALEFVLGAARAAGATAVLTSGTAGSNHVAATALHAGRLGFRVTALVLPQEPGALVARNLRLAAGAGARLEPVPDGVSVHPDRERHRAAVAELRERGERVHVIPFGGADPVAGVAHALAGLELAEQARGLPGPLRVHLPAASTLTAAGIAAGLALSGLPFQVTAVDVVGSSSTLGPGLLGRAREVAALLGGPADAVRPEHVRHVGYAGAPYGVPDPEAGRCADLLREAADVRVDECYGAKAFHHLLGEVGDADGTHLFWHTGSTREAGEVFGPVPPELLCYVE.

At K43 the chain carries N6-(pyridoxal phosphate)lysine.

The protein belongs to the ACC deaminase/D-cysteine desulfhydrase family. It depends on pyridoxal 5'-phosphate as a cofactor.

It catalyses the reaction isonocardicin C = nocardicin C. The enzyme catalyses isonocardicin A = nocardicin A. It participates in antibiotic biosynthesis. Involved in the biosynthesis of the beta-lactam antibiotic nocardicin A. Catalyzes the interconversion of the nocardicin homoseryl side chain in both nocardicin A with isonocardicin A, and nocardicin C with isonocardicin C. This chain is Nocardicin C-9' epimerase, found in Nocardia uniformis subsp. tsuyamanensis.